Reading from the N-terminus, the 248-residue chain is 2,3-bisphosphoglycerate-dependent phosphoglycerate mutase (248 aa).

Residues 8–15, 21–22, Arg60, 87–90, Lys98, 114–115, and 183–184 each bind substrate; these read RHGESTWN, TG, EKHY, RR, and GN. The Tele-phosphohistidine intermediate role is filled by His9. Residue Glu87 is the Proton donor/acceptor of the active site.

Belongs to the phosphoglycerate mutase family. BPG-dependent PGAM subfamily.

The catalysed reaction is (2R)-2-phosphoglycerate = (2R)-3-phosphoglycerate. The protein operates within carbohydrate degradation; glycolysis; pyruvate from D-glyceraldehyde 3-phosphate: step 3/5. Functionally, catalyzes the interconversion of 2-phosphoglycerate and 3-phosphoglycerate. The chain is 2,3-bisphosphoglycerate-dependent phosphoglycerate mutase from Elusimicrobium minutum (strain Pei191).